Consider the following 217-residue polypeptide: Probable transaldolase (217 aa).

Residue K83 is the Schiff-base intermediate with substrate of the active site.

The protein belongs to the transaldolase family. Type 3B subfamily.

Its subcellular location is the cytoplasm. The enzyme catalyses D-sedoheptulose 7-phosphate + D-glyceraldehyde 3-phosphate = D-erythrose 4-phosphate + beta-D-fructose 6-phosphate. It participates in carbohydrate degradation; pentose phosphate pathway; D-glyceraldehyde 3-phosphate and beta-D-fructose 6-phosphate from D-ribose 5-phosphate and D-xylulose 5-phosphate (non-oxidative stage): step 2/3. Its function is as follows. Transaldolase is important for the balance of metabolites in the pentose-phosphate pathway. In Ruegeria pomeroyi (strain ATCC 700808 / DSM 15171 / DSS-3) (Silicibacter pomeroyi), this protein is Probable transaldolase.